The chain runs to 94 residues: Conotoxin Gla-MrII (94 aa).

An N-terminal signal peptide occupies residues 1–25 (MFGHTSVSFLLLSIVALGMVATVIC). 4-carboxyglutamate occurs at positions 30, 34, 37, 40, and 41. The propeptide occupies 78 to 94 (STHMQKRFLRMPRDLAD).

Belongs to the conotoxin I2 superfamily. Post-translationally, contains 4 disulfide bonds. Expressed by the venom duct.

The protein localises to the secreted. In Conus marmoreus (Marble cone), this protein is Conotoxin Gla-MrII.